The following is a 223-amino-acid chain: MATPQSIFIFAICILMITELILASKSYYDILGVPKSASERQIKKAFHKLAMKYHPDKNKSPDAEAKFREIAEAYETLSDANRRKEYDTLGHSAFTSGKGQRGSGSSFEQSFNFNFDDLFKDFGFFGQNQNTGSKKRFENHFQTRQDGGSSRQRHHFQEFSFGGGLFDDMFEDMEKMFSFSGFDSTNQHTVQTENRFHGSSKHCRTVTQRRGNMVTTYTDCSGQ.

A signal peptide spans 1–23 (MATPQSIFIFAICILMITELILA). The J domain maps to 26–90 (SYYDILGVPK…NRRKEYDTLG (65 aa)). Residues 91–223 (HSAFTSGKGQ…VTTYTDCSGQ (133 aa)) are divergent targeting domain. At Ser133 the chain carries Phosphoserine.

In terms of assembly, interacts with HSPA5/BiP; interaction is direct. Interacts with ERN1/IRE1 (via the luminal region). Interacts with DERL1. In terms of tissue distribution, widely expressed. Expressed at highest level in the liver, placenta and kidney.

The protein resides in the endoplasmic reticulum lumen. Functionally, co-chaperone for Hsp70 protein HSPA5/BiP that acts as a key repressor of the ERN1/IRE1-mediated unfolded protein response (UPR). J domain-containing co-chaperones stimulate the ATPase activity of Hsp70 proteins and are required for efficient substrate recognition by Hsp70 proteins. In the unstressed endoplasmic reticulum, interacts with the luminal region of ERN1/IRE1 and selectively recruits HSPA5/BiP: HSPA5/BiP disrupts the dimerization of the active ERN1/IRE1 luminal region, thereby inactivating ERN1/IRE1. Also involved in endoplasmic reticulum-associated degradation (ERAD) of misfolded proteins. Required for survival of B-cell progenitors and normal antibody production. This is DnaJ homolog subfamily B member 9 (DNAJB9) from Homo sapiens (Human).